Here is a 627-residue protein sequence, read N- to C-terminus: 1-deoxy-D-xylulose-5-phosphate synthase (627 aa).

Thiamine diphosphate-binding positions include His72 and 113 to 115 (GHS). Asp144 contacts Mg(2+). Thiamine diphosphate is bound by residues 145–146 (GA), Asn173, Tyr283, and Glu366. Residue Asn173 coordinates Mg(2+).

The protein belongs to the transketolase family. DXPS subfamily. As to quaternary structure, homodimer. Mg(2+) serves as cofactor. It depends on thiamine diphosphate as a cofactor.

The catalysed reaction is D-glyceraldehyde 3-phosphate + pyruvate + H(+) = 1-deoxy-D-xylulose 5-phosphate + CO2. Its pathway is metabolic intermediate biosynthesis; 1-deoxy-D-xylulose 5-phosphate biosynthesis; 1-deoxy-D-xylulose 5-phosphate from D-glyceraldehyde 3-phosphate and pyruvate: step 1/1. Functionally, catalyzes the acyloin condensation reaction between C atoms 2 and 3 of pyruvate and glyceraldehyde 3-phosphate to yield 1-deoxy-D-xylulose-5-phosphate (DXP). The polypeptide is 1-deoxy-D-xylulose-5-phosphate synthase (Macrococcus caseolyticus (strain JCSC5402) (Macrococcoides caseolyticum)).